We begin with the raw amino-acid sequence, 328 residues long: uncharacterized protein (328 aa).

Positions 1-32 (MFNFRLFSRRGKSLGLLAIVLLLFGFYSLKSS) are cleaved as a signal peptide.

Belongs to the glycosyltransferase 34 family.

The protein localises to the endoplasmic reticulum. This is an uncharacterized protein from Schizosaccharomyces pombe (strain 972 / ATCC 24843) (Fission yeast).